We begin with the raw amino-acid sequence, 410 residues long: MLPADVANRHSCEKNLYVGACKLTLPMKQLWWAVYIIDTVLVIPFAIFFYESDQEKTVTQRVKNALLWVVILLTVFCLLLGILYAVIGYADFTMRSLSSTTMAFINDFSSLNAKASCLVSAGFSLFSNVTLMVSLFFYIFPFFIDLTTLCDSVQLICLDLWLKLSVTYVITLNTIIGSILFMMFGGVGMATLPLSLIFAFKNRPKCVITRAQYVKEATDLAKRSNELKTATLGLQREERGGKKGRMFRKNVKKVQQELVFLEDDVEALNEAFPQGEKTLTVLFYLAKLVFGIVGLALSIIWLLHIIVFMLVNPPAFPFLNQVFIQLDTVGGLLGTTTFAIFCYYLVMSVISGKMHLGMRLLFLSIHPMKYQGTLDPMWHENVIASGAQPSSAMDSSSWSADRPCRPWPWP.

The next 5 helical transmembrane spans lie at 30-50, 67-87, 129-149, 156-176, and 179-199; these read LWWAVYIIDTVLVIPFAIFFY, LWVVILLTVFCLLLGILYAVI, VTLMVSLFFYIFPFFIDLTTL, ICLDLWLKLSVTYVITLNTII, and ILFMMFGGVGMATLPLSLIFA. Residues 245–274 adopt a coiled-coil conformation; sequence RMFRKNVKKVQQELVFLEDDVEALNEAFPQ. 2 consecutive transmembrane segments (helical) span residues 288 to 308 and 330 to 350; these read LVFGIVGLALSIIWLLHIIVF and GGLLGTTTFAIFCYYLVMSVI. Over residues 389-400 the composition is skewed to low complexity; that stretch reads PSSAMDSSSWSA. The disordered stretch occupies residues 389–410; that stretch reads PSSAMDSSSWSADRPCRPWPWP.

It belongs to the LIMR family.

Its subcellular location is the membrane. This chain is LIMR family protein SELMODRAFT_432208, found in Selaginella moellendorffii (Spikemoss).